Here is a 214-residue protein sequence, read N- to C-terminus: Redox-sensing transcriptional repressor Rex (214 aa).

Residues 17 to 56 (KYHRYLEELLKSDVDRISSKELSEKIGFTASQIRQDLNCF) constitute a DNA-binding region (H-T-H motif). 91 to 96 (GAGNIG) is a binding site for NAD(+).

This sequence belongs to the transcriptional regulatory Rex family. In terms of assembly, homodimer.

The protein localises to the cytoplasm. Its function is as follows. Modulates transcription in response to changes in cellular NADH/NAD(+) redox state. The chain is Redox-sensing transcriptional repressor Rex from Clostridium acetobutylicum (strain ATCC 824 / DSM 792 / JCM 1419 / IAM 19013 / LMG 5710 / NBRC 13948 / NRRL B-527 / VKM B-1787 / 2291 / W).